A 113-amino-acid polypeptide reads, in one-letter code: Hydrogenase maturation factor HypA (113 aa).

Histidine 2 contributes to the Ni(2+) binding site. The Zn(2+) site is built by cysteine 73, cysteine 76, cysteine 89, and cysteine 92.

It belongs to the HypA/HybF family.

Functionally, involved in the maturation of [NiFe] hydrogenases. Required for nickel insertion into the metal center of the hydrogenase. This chain is Hydrogenase maturation factor HypA, found in Legionella pneumophila (strain Paris).